The following is a 375-amino-acid chain: MSTAGKVIKCKAAVLWELKKPFSIEEVEVAPPKAQEVRIKMVAVGICGTDDHVVSGTMVTPLPAILGHEAAGIVESVGEGVTTVKPGDKVIPLAVPQCGKCRICKNPESNYCLKNDVSNPQGTLQDGTSRFTCRGKPIHHFLGISTFSQYTVVDENAVAKIDAASPLAKVCLIGCGFSTGYGSAVNVAKVTPGSTCAVFGLGGVGLSVVMGCKAAGAARIIAVDINKDKFAKAKELGATECINPQDYNKPIQEVLKEMTDGGVDFSFEVIGRLDTMMASLLCCHEACGTSVIVGVPPDSQNLSMNPMLLLTGRTWKGAVLGGFKSKECVPKLVADFMAKKFSLDALITHVLPFEKINDGFDLLHSGKSIRTILMF.

Serine 2 carries the N-acetylserine modification. Serine 23 carries the phosphoserine modification. A Zn(2+)-binding site is contributed by cysteine 47. Residue 48–52 participates in NAD(+) binding; it reads GTDDH. Positions 68, 98, 101, 104, 112, and 175 each coordinate Zn(2+). NAD(+) contacts are provided by residues 200 to 205, aspartate 224, lysine 229, isoleucine 270, 293 to 295, 318 to 320, and arginine 370; these read GLGGVG, VGV, and AVL.

The protein belongs to the zinc-containing alcohol dehydrogenase family. Dimer of identical or heterodimer of closely related subunits alpha, beta, or gamma that are encoded by genes ADH1A, ADH1B, and ADH1C, respectively. Zn(2+) is required as a cofactor.

The protein localises to the cytoplasm. The enzyme catalyses a primary alcohol + NAD(+) = an aldehyde + NADH + H(+). It carries out the reaction a secondary alcohol + NAD(+) = a ketone + NADH + H(+). It catalyses the reaction butan-1-ol + NAD(+) = butanal + NADH + H(+). The catalysed reaction is 1-propanol + NAD(+) = propanal + NADH + H(+). Alcohol dehydrogenase. Oxidizes primary as well as secondary alcohols. Ethanol is a very poor substrate. This is Alcohol dehydrogenase 1A (ADH1A) from Pongo abelii (Sumatran orangutan).